Here is a 144-residue protein sequence, read N- to C-terminus: Probable DNA-directed RNA polymerases I and III subunit RPAC2 (144 aa).

The disordered stretch occupies residues 14–47; that stretch reads KVEAETMEVDEQPQETPQVDDEEDLNVPSKKKME. Acidic residues predominate over residues 18–38; it reads ETMEVDEQPQETPQVDDEEDL.

Belongs to the archaeal Rpo11/eukaryotic RPB11/RPC19 RNA polymerase subunit family. As to quaternary structure, component of the RNA polymerase I (Pol I) and RNA polymerase III (Pol III) complexes consisting of at least 13 and 17 subunits, respectively.

It localises to the nucleus. DNA-dependent RNA polymerase catalyzes the transcription of DNA into RNA using the four ribonucleoside triphosphates as substrates. Common core component of RNA polymerases I and III which synthesize ribosomal RNA precursors and small RNAs, such as 5S rRNA and tRNAs, respectively. The chain is Probable DNA-directed RNA polymerases I and III subunit RPAC2 (rpac-19) from Caenorhabditis elegans.